A 621-amino-acid chain; its full sequence is Chaperone protein HtpG (621 aa).

The a; substrate-binding stretch occupies residues 1-328; the sequence is MKQEKKKFDA…SEDLPLNISR (328 aa). The tract at residues 329–544 is b; sequence ESLQHNNVLE…EAAMDIRMER (216 aa). Positions 478-498 are disordered; sequence DVDQATSSSEEKNKDDKKSDD. Positions 486 to 498 are enriched in basic and acidic residues; that stretch reads SEEKNKDDKKSDD. The tract at residues 545-621 is c; that stretch reads FLIEQKQIAN…LNDIVQKAIL (77 aa).

It belongs to the heat shock protein 90 family. Homodimer.

The protein localises to the cytoplasm. Its function is as follows. Molecular chaperone. Has ATPase activity. This chain is Chaperone protein HtpG, found in Rickettsia bellii (strain RML369-C).